Here is a 558-residue protein sequence, read N- to C-terminus: Protein shisa-7 (558 aa).

The N-terminal stretch at 1–22 (MPALLLLGTVALLASAAGPAGA) is a signal peptide. Over 23-189 (RPSNDTSSVA…GGEGPGGSTA (167 aa)) the chain is Extracellular. An N-linked (GlcNAc...) asparagine glycan is attached at Asn26. Disordered stretches follow at residues 53 to 79 (GGSA…ARAP) and 142 to 181 (TPPP…GRGG). Residues 57 to 77 (AGTSANATKTSPASGTGAAAR) show a composition bias toward low complexity. Residues 148 to 181 (GGAGGAGGAGGGPGPGQAGWLEGGRAGGAGGRGG) are compositionally biased toward gly residues. A GRID region spans residues 154–175 (GGAGGGPGPGQAGWLEGGRAGG). Residues 190–210 (YVVCGVISFALAVGVGAKVAF) traverse the membrane as a helical segment. Topologically, residues 211 to 558 (SKASRAPRAH…RTASKNEVTV (348 aa)) are cytoplasmic. Residues 236-263 (QAGPATRPDRARSSSLTPGLGGPDSMAP) form a disordered region. The residue at position 438 (Ser438) is a Phosphoserine. Positions 443–506 (RQSREHLLSP…HHHHALHGSP (64 aa)) are disordered. Pro residues predominate over residues 453-462 (PRSPALPPDP). Residues 466 to 477 (ASLAASHSNLLL) show a composition bias toward low complexity. At Thr532 the chain carries Phosphothreonine. Positions 555-558 (EVTV) match the PDZ-binding motif.

Belongs to the shisa family. Interacts with GABA(A)R (GABA type A receptor) subunits GABRA1, GABRA2 and GABRG2; the interaction is direct. Does not interact with GABRB2 and GABRB3 subunits. Interacts with AMPAR subunits GRIA1, GRIA2 and GRIA3 and AMPAR auxiliary proteins SHISA6 and SHISA7 in heterologous cells. Interacts (via PDZ-binding motif) with DLG4/PSD-95 (via PDZ domain)in heterologous cells; the interaction is direct. In terms of processing, N-glycosylated. As to expression, mainly expressed in neurons. Highly expressed in brain structures including cortex, striatum, olfactory bulb, amygdala hippocampus CA1-3 and dentate gyrus (at protein level).

Its subcellular location is the postsynaptic density membrane. Its function is as follows. Transmembrane protein that regulates gamma-aminobutyric acid type A receptor (GABA(A)R) trafficking, channel deactivation kinetics and pharmacology, necessary for fast inhibitory transmission in the brain. Enhances the action of benzodiazepine, a primary GABA(A)Rs target drug, in the brain. May affect channel kinetics of AMPA-type glutamate receptors (AMPAR), the brain's main excitatory neurotransmitter, necessary for synaptic hippocampal plasticity, and memory recall. May regulate the induction and maintenance of long-term potentiation at Schaffer collaterals/CA3-CA1 excitatory synapses. The protein is Protein shisa-7 of Mus musculus (Mouse).